Consider the following 84-residue polypeptide: U8-theraphotoxin-Hhn1d (84 aa).

Residues 1-21 form the signal peptide; the sequence is MKVVLIVCLVWVMAMMELVSC. 5 cysteine pairs are disulfide-bonded: cysteine 23–cysteine 35, cysteine 29–cysteine 44, cysteine 34–cysteine 67, cysteine 54–cysteine 75, and cysteine 69–cysteine 81.

This sequence belongs to the AVIT (prokineticin) family. In terms of tissue distribution, expressed by the venom gland.

The protein localises to the secreted. The polypeptide is U8-theraphotoxin-Hhn1d (Cyriopagopus hainanus (Chinese bird spider)).